Reading from the N-terminus, the 103-residue chain is Secreted LysM effector Mgx1LysM (103 aa).

The signal sequence occupies residues 1-18 (MKVTTIIAALLSVAVVDA). Cystine bridges form between C31/C89 and C62/C97. Residues 37-85 (IPYVVKKGDTLTHIAHDIYKRKVGICDLAYTNHIGYNPDLIYEDQTLLI) enclose the LysM domain. Residues G44, T48, D75, and I77 each coordinate chitin.

It belongs to the secreted LysM effector family. In terms of assembly, forms homodimers in a chitin-independent manner through interactions at the N-termini of Mgx1LysM monomers. Homodimers are further polymerized in a chitin-dependent manner.

It localises to the secreted. The protein localises to the cell wall. In terms of biological role, secreted effector that enables the plant pathogenic fungus to manipulate host defenses for successful infection. Binds chitin and suppresses the chitin-induced reactive oxygen species (ROS) burst. Chitin-induced polymerization of homodimers forms a contiguous Mg1LysM highly oligomeric super-complexe that is anchored to the chitin in the fungal cell wall to prevent hydrolysis by host chitinases. The polypeptide is Secreted LysM effector Mgx1LysM (Zymoseptoria tritici (strain CBS 115943 / IPO323) (Speckled leaf blotch fungus)).